The sequence spans 549 residues: OBERON-like protein (549 aa).

The segment at Met-1–Thr-56 is disordered. Composition is skewed to polar residues over residues Pro-28 to Asp-38 and Ser-45 to Thr-56. The segment at Leu-224–Thr-288 adopts a PHD-type zinc-finger fold. Positions Val-394–Glu-520 form a coiled coil. Residues Gln-519–Met-549 form a disordered region. Residues Ser-521 to Met-538 are compositionally biased toward polar residues.

Self-interacts and probably forms heteromers. Binds to VPg of pea seed borne mosaic virus (PSbMV), turnip mosaic virus (TuMV) and lettuce mosaic virus (LMV), but not with VPg of tobacco etch virus (TEV), cowpea mosaic virus (CPMV), tomato black ring virus (TBRV) and grapevine fan leaf virus (GFLV).

It is found in the nucleus. Required for the maintenance and/or establishment of both the shoot and root meristems, probably by controlling the expression of the meristem genes and of genes required for auxin responses. Involved in the development of the basal pole and in auxin-mediated root and vascular development in the embryo. Confers sensitivity to turnip mosaic virus (TuMV) probably by promoting viral movement and multiplication via interaction with TuMV VPg. This Nicotiana benthamiana protein is OBERON-like protein (PVIP).